We begin with the raw amino-acid sequence, 259 residues long: Type III pantothenate kinase (259 aa).

Asp-6 to Val-13 lines the ATP pocket. Residue Gly-107 to Arg-110 coordinates substrate. Asp-109 functions as the Proton acceptor in the catalytic mechanism. Asp-129 serves as a coordination point for K(+). ATP is bound at residue Thr-132. Thr-184 is a binding site for substrate.

The protein belongs to the type III pantothenate kinase family. As to quaternary structure, homodimer. Requires NH4(+) as cofactor. K(+) serves as cofactor.

It is found in the cytoplasm. It catalyses the reaction (R)-pantothenate + ATP = (R)-4'-phosphopantothenate + ADP + H(+). Its pathway is cofactor biosynthesis; coenzyme A biosynthesis; CoA from (R)-pantothenate: step 1/5. Functionally, catalyzes the phosphorylation of pantothenate (Pan), the first step in CoA biosynthesis. This chain is Type III pantothenate kinase, found in Thermomicrobium roseum (strain ATCC 27502 / DSM 5159 / P-2).